A 1630-amino-acid polypeptide reads, in one-letter code: Separin (1630 aa).

The tract at residues 1016 to 1037 (SKHSTGLKLCDSPRSSSMTPRG) is disordered. Positions 1443-1542 (EDNISMILNP…SAAMKYYGKL (100 aa)) constitute a Peptidase C50 domain. The active site involves cysteine 1531.

In terms of assembly, may bind calcium. Interacts with PDS1. Interacts with MCD1.

It is found in the nucleus. The protein localises to the cytoplasm. The protein resides in the cytoskeleton. It localises to the microtubule organizing center. Its subcellular location is the spindle pole body. The catalysed reaction is All bonds known to be hydrolyzed by this endopeptidase have arginine in P1 and an acidic residue in P4. P6 is often occupied by an acidic residue or by a hydroxy-amino-acid residue, the phosphorylation of which enhances cleavage.. It is inactivated via its interaction with PDS1, which probably covers its active site. PDS1 degradation at anaphase, liberates it and triggers MCD1 cleavage. In terms of biological role, caspase-like protease, which plays a central role in the chromosome segregation by cleaving the MCD1/SCC1 subunit of the cohesin complex at the onset of anaphase. During most of the cell cycle, it is inactivated by securin/PDS1 protein. It also promotes anaphase spindle elongation. A component of the FEAR (CDC14 early anaphase release) network which promotes CDC14 release from the nucleolus during early anaphase. Cleaves SLK19. This Saccharomyces cerevisiae (strain ATCC 204508 / S288c) (Baker's yeast) protein is Separin (ESP1).